Consider the following 149-residue polypeptide: Ribonuclease H (149 aa).

The RNase H type-1 domain occupies 4 to 145; it reads QRGVVEAFTD…ADALANQGID (142 aa). The Mg(2+) site is built by D13, E51, D73, and D137.

This sequence belongs to the RNase H family. In terms of assembly, monomer. It depends on Mg(2+) as a cofactor.

The protein localises to the cytoplasm. It catalyses the reaction Endonucleolytic cleavage to 5'-phosphomonoester.. In terms of biological role, endonuclease that specifically degrades the RNA of RNA-DNA hybrids. The protein is Ribonuclease H of Halorhodospira halophila (strain DSM 244 / SL1) (Ectothiorhodospira halophila (strain DSM 244 / SL1)).